The following is a 387-amino-acid chain: Protein kinase ORF16 (387 aa).

A Protein kinase domain is found at 82–381 (KKILSRVGPE…VTLMTELSLL (300 aa)). Residue K122 coordinates ATP. D226 acts as the Proton acceptor in catalysis.

It belongs to the protein kinase superfamily. Ser/Thr protein kinase family.

The enzyme catalyses L-seryl-[protein] + ATP = O-phospho-L-seryl-[protein] + ADP + H(+). It carries out the reaction L-threonyl-[protein] + ATP = O-phospho-L-threonyl-[protein] + ADP + H(+). In Ictalurid herpesvirus 1 (strain Auburn) (IcHV-1), this protein is Protein kinase ORF16 (ORF16).